A 954-amino-acid chain; its full sequence is Glycine dehydrogenase (decarboxylating) (954 aa).

N6-(pyridoxal phosphate)lysine is present on lysine 704.

It belongs to the GcvP family. In terms of assembly, the glycine cleavage system is composed of four proteins: P, T, L and H. The cofactor is pyridoxal 5'-phosphate.

It carries out the reaction N(6)-[(R)-lipoyl]-L-lysyl-[glycine-cleavage complex H protein] + glycine + H(+) = N(6)-[(R)-S(8)-aminomethyldihydrolipoyl]-L-lysyl-[glycine-cleavage complex H protein] + CO2. Its function is as follows. The glycine cleavage system catalyzes the degradation of glycine. The P protein binds the alpha-amino group of glycine through its pyridoxal phosphate cofactor; CO(2) is released and the remaining methylamine moiety is then transferred to the lipoamide cofactor of the H protein. This Vibrio cholerae serotype O1 (strain ATCC 39541 / Classical Ogawa 395 / O395) protein is Glycine dehydrogenase (decarboxylating).